A 139-amino-acid chain; its full sequence is Putative esterase PM0788 (139 aa).

It belongs to the thioesterase PaaI family.

The sequence is that of Putative esterase PM0788 from Pasteurella multocida (strain Pm70).